A 368-amino-acid polypeptide reads, in one-letter code: Glucose 1-dehydrogenase 2 (368 aa).

Cys-41 is a binding site for Zn(2+). Thr-43 is a binding site for substrate. Zn(2+)-binding residues include His-68 and Glu-69. Asn-91 is a substrate binding site. Residues Cys-95, Cys-98, Cys-101, Cys-109, and Gln-152 each contribute to the Zn(2+) site. Substrate-binding residues include Gln-152 and Asp-156. Residues 213 to 215 (NRR), 279 to 281 (FGF), 307 to 309 (LDN), and Lys-356 each bind NADP(+). Asn-309 serves as a coordination point for substrate.

This sequence belongs to the zinc-containing alcohol dehydrogenase family. Glucose 1-dehydrogenase subfamily. The cofactor is Zn(2+).

It carries out the reaction D-glucose + NAD(+) = D-glucono-1,5-lactone + NADH + H(+). The catalysed reaction is D-glucose + NADP(+) = D-glucono-1,5-lactone + NADPH + H(+). Catalyzes the NAD(P)(+)-dependent oxidation of D-glucose to D-gluconate via gluconolactone. Can utilize both NAD(+) and NADP(+) as electron acceptor. Is involved in the degradation of glucose through a non-phosphorylative variant of the Entner-Doudoroff pathway. The protein is Glucose 1-dehydrogenase 2 of Saccharolobus solfataricus (strain ATCC 35092 / DSM 1617 / JCM 11322 / P2) (Sulfolobus solfataricus).